The sequence spans 317 residues: tRNA dimethylallyltransferase (317 aa).

19–26 is an ATP binding site; it reads GPTASGKS. Residue 21 to 26 participates in substrate binding; that stretch reads TASGKS. The tract at residues 49 to 52 is interaction with substrate tRNA; the sequence is DSAQ.

This sequence belongs to the IPP transferase family. In terms of assembly, monomer. Mg(2+) is required as a cofactor.

It carries out the reaction adenosine(37) in tRNA + dimethylallyl diphosphate = N(6)-dimethylallyladenosine(37) in tRNA + diphosphate. Functionally, catalyzes the transfer of a dimethylallyl group onto the adenine at position 37 in tRNAs that read codons beginning with uridine, leading to the formation of N6-(dimethylallyl)adenosine (i(6)A). The chain is tRNA dimethylallyltransferase from Erythrobacter litoralis (strain HTCC2594).